A 1023-amino-acid polypeptide reads, in one-letter code: Rho GTPase-activating protein 11A (1023 aa).

A Rho-GAP domain is found at 49 to 239 (VPFNALPHSA…TLIDYASDIG (191 aa)). The residue at position 285 (Ser285) is a Phosphoserine. Thr306 carries the phosphothreonine modification. Phosphoserine occurs at positions 316 and 318. Position 323 is a phosphothreonine (Thr323). A phosphoserine mark is found at Ser339, Ser340, and Ser484. A Phosphothreonine modification is found at Thr508. Positions 567–589 (TPSNLNNKHNSNITSSPLSGDEN) are disordered. A phosphoserine mark is found at Ser582, Ser585, Ser638, and Ser675. Residues 714-734 (KQEFSSDEEIKKQQSPKDKLN) form a disordered region. Positions 721–734 (EEIKKQQSPKDKLN) are enriched in basic and acidic residues. Position 847 is a phosphoserine (Ser847). Thr866 is subject to Phosphothreonine. At Ser868 the chain carries Phosphoserine. A disordered region spans residues 999 to 1023 (AWYKGSPKHPIGKTQLLPTSKPVDL).

Its subcellular location is the nucleus. Its function is as follows. GTPase activator for the Rho-type GTPases by converting them to an inactive GDP-bound state. In Homo sapiens (Human), this protein is Rho GTPase-activating protein 11A.